A 431-amino-acid polypeptide reads, in one-letter code: Zeaxanthin glucosyltransferase (431 aa).

The protein belongs to the UDP-glycosyltransferase family.

The enzyme catalyses all-trans-zeaxanthin + 2 UDP-alpha-D-glucose = zeaxanthin bis(beta-D-glucoside) + 2 UDP + 2 H(+). It participates in carotenoid biosynthesis; zeaxanthin diglucoside biosynthesis. Functionally, catalyzes the glycosylation reaction which converts zeaxanthin to zeaxanthin bis(beta-D-glucoside). The reaction proceeds in two steps with the monoglucoside as an intermediate. This chain is Zeaxanthin glucosyltransferase (crtX), found in Pantoea ananas (Erwinia uredovora).